The chain runs to 320 residues: MIKKIGVLTSGGDAPGMNAAIRGVVRTALGAGLEVYGIYDGYLGLYEGRIKQLDRSSVSDVINRGGTFLGSARFPEFKEVAVREKAIENLKAHGIDALVVIGGDGSYMGAKKLTEMGYPCIGLPGTIDNDIAGTDYTIGYLTALNTVIESIDRLRDTSSSHQRISIVEIMGRHCGDLTLMSAIAGGCEYIITPETGLDKEKLIGNIQDGISKGKKHAIIALTELMMDANELAKEIEAGTGRETRATVLGHIQRGGRPTAFDRVLASRMGNYAVHLLMEGHGGRCVGIVKEQLVHHDIIDAIENMKRPVRNDLFKVAEELF.

ATP is bound at residue Gly12. Residue 22 to 26 (RGVVR) coordinates ADP. ATP is bound by residues 73 to 74 (RF) and 103 to 106 (GDGS). Asp104 lines the Mg(2+) pocket. Residue 126-128 (TID) coordinates substrate. The active-site Proton acceptor is the Asp128. An ADP-binding site is contributed by Arg155. Substrate is bound by residues Arg163 and 170–172 (MGR). ADP is bound by residues 186–188 (GCE), Lys212, and 214–216 (KKH). Substrate-binding positions include Glu223, Arg244, and 250–253 (HIQR).

This sequence belongs to the phosphofructokinase type A (PFKA) family. ATP-dependent PFK group I subfamily. Prokaryotic clade 'B1' sub-subfamily. Homotetramer. The cofactor is Mg(2+).

The protein localises to the cytoplasm. The catalysed reaction is beta-D-fructose 6-phosphate + ATP = beta-D-fructose 1,6-bisphosphate + ADP + H(+). It participates in carbohydrate degradation; glycolysis; D-glyceraldehyde 3-phosphate and glycerone phosphate from D-glucose: step 3/4. Its activity is regulated as follows. Allosterically activated by ADP and other diphosphonucleosides, and allosterically inhibited by phosphoenolpyruvate. In terms of biological role, catalyzes the phosphorylation of D-fructose 6-phosphate to fructose 1,6-bisphosphate by ATP, the first committing step of glycolysis. This Vibrio vulnificus (strain CMCP6) protein is ATP-dependent 6-phosphofructokinase.